A 119-amino-acid polypeptide reads, in one-letter code: Enhancer of yellow 2 transcription factor (119 aa).

The interval 93–119 (LTENETEGTDNHDDDEDDEDENGTEDN) is disordered. Residues 96–119 (NETEGTDNHDDDEDDEDENGTEDN) show a composition bias toward acidic residues.

Belongs to the ENY2 family. Component of the nuclear pore complex (NPC)-associated AMEX complex (anchoring and mRNA export complex), composed of at least e(y)2 and xmas-2. Component of the SAGA transcription coactivator-HAT complexes, at least composed of Ada2b, e(y)2, Pcaf/Gcn5, Taf10 and Nipped-A/Trrap. Within the SAGA complex, e(y)2, Sgf11, and not/nonstop form an additional subcomplex of SAGA called the DUB module (deubiquitination module). Component of the THO complex, composed of at least e(y)2, HPR1, THO2, THOC5, THOC6 and THOC7. Interacts with e(y)1. Interacts with su(Hw) (via zinc fingers). Interacts with xmas-2; required for localization to the nuclear periphery. Interacts with the nuclear pore complex (NPC).

The protein localises to the nucleus. Its subcellular location is the nucleoplasm. It is found in the cytoplasm. Functionally, involved in mRNA export coupled transcription activation by association with both the AMEX and the SAGA complexes. The SAGA complex is a multiprotein complex that activates transcription by remodeling chromatin and mediating histone acetylation and deubiquitination. Within the SAGA complex, participates in a subcomplex that specifically deubiquitinates histone H2B. The SAGA complex is recruited to specific gene promoters by activators, where it is required for transcription. Required for nuclear receptor-mediated transactivation. Involved in transcription elongation by recruiting the THO complex onto nascent mRNA. The AMEX complex functions in docking export-competent ribonucleoprotein particles (mRNPs) to the nuclear entrance of the nuclear pore complex (nuclear basket). AMEX participates in mRNA export and accurate chromatin positioning in the nucleus by tethering genes to the nuclear periphery. The chain is Enhancer of yellow 2 transcription factor from Drosophila willistoni (Fruit fly).